A 517-amino-acid chain; its full sequence is Serine hydroxymethyltransferase 2, mitochondrial (517 aa).

The transit peptide at 1-31 (MAMASALRRLSSSSNKPLQRLFNGGHLYSMS) directs the protein to the mitochondrion. N6-(pyridoxal phosphate)lysine is present on K287.

This sequence belongs to the SHMT family. In terms of assembly, homotetramer. Requires pyridoxal 5'-phosphate as cofactor.

It localises to the mitochondrion. It carries out the reaction (6R)-5,10-methylene-5,6,7,8-tetrahydrofolate + glycine + H2O = (6S)-5,6,7,8-tetrahydrofolate + L-serine. Its pathway is one-carbon metabolism; tetrahydrofolate interconversion. In terms of biological role, catalyzes the interconversion of serine and glycine. The sequence is that of Serine hydroxymethyltransferase 2, mitochondrial from Flaveria pringlei.